The sequence spans 126 residues: Large ribosomal subunit protein mL55 (126 aa).

Residues 1-34 (MSAKGSLLRLLWQCGMTRAAPESCRYLYTSSWRA) constitute a mitochondrion transit peptide. Ser86 carries the post-translational modification Phosphoserine.

Belongs to the mitochondrion-specific ribosomal protein mL55 family. In terms of assembly, component of the mitochondrial ribosome large subunit (39S) which comprises a 16S rRNA and about 50 distinct proteins.

It is found in the mitochondrion. This is Large ribosomal subunit protein mL55 (MRPL55) from Bos taurus (Bovine).